A 576-amino-acid polypeptide reads, in one-letter code: Putative diflavin flavoprotein A 1 (576 aa).

The tract at residues 48–240 (RNGTTYNSFL…LAIKTVATGH (193 aa)) is zinc metallo-hydrolase. The Fe cation site is built by histidine 97, glutamate 99, aspartate 101, histidine 164, aspartate 183, and histidine 240. A Flavodoxin-like domain is found at 269–431 (VALFYAEDYG…DLEKALGRIS (163 aa)). A flavodoxin-reductase-like region spans residues 432 to 576 (TGLYIITTKK…VHHRKVGNHY (145 aa)).

This sequence in the N-terminal section; belongs to the zinc metallo-hydrolase group 3 family. In the C-terminal section; belongs to the flavodoxin reductase family. The cofactor is Fe cation.

Mediates electron transfer from NADH to oxygen, reducing it to water. This modular protein has 3 redox cofactors, in other organisms the same activity requires 2 or 3 proteins. In Nostoc sp. (strain PCC 7120 / SAG 25.82 / UTEX 2576), this protein is Putative diflavin flavoprotein A 1 (dfa1).